A 214-amino-acid chain; its full sequence is Octanoyltransferase (214 aa).

A BPL/LPL catalytic domain is found at 32-207; that stretch reads EDTLDEIWLV…NLLALLNHPP (176 aa). Residues 71–78, 138–140, and 151–153 each bind substrate; these read RGGQVTYH, SLG, and GLA. Cys-169 serves as the catalytic Acyl-thioester intermediate.

This sequence belongs to the LipB family.

Its subcellular location is the cytoplasm. It carries out the reaction octanoyl-[ACP] + L-lysyl-[protein] = N(6)-octanoyl-L-lysyl-[protein] + holo-[ACP] + H(+). The protein operates within protein modification; protein lipoylation via endogenous pathway; protein N(6)-(lipoyl)lysine from octanoyl-[acyl-carrier-protein]: step 1/2. Its function is as follows. Catalyzes the transfer of endogenously produced octanoic acid from octanoyl-acyl-carrier-protein onto the lipoyl domains of lipoate-dependent enzymes. Lipoyl-ACP can also act as a substrate although octanoyl-ACP is likely to be the physiological substrate. This is Octanoyltransferase from Klebsiella pneumoniae (strain 342).